The primary structure comprises 722 residues: Homeobox-leucine zipper protein HDG11 (722 aa).

A compositionally biased stretch (gly residues) spans 1–19 (MSFVVGVGGSGSGSGGDGG). The tract at residues 1 to 42 (MSFVVGVGGSGSGSGGDGGGSHHHDGSETDRKKKRYHRHTAQ) is disordered. A compositionally biased stretch (basic and acidic residues) spans 20–31 (GSHHHDGSETDR). Residues 32–91 (KKKRYHRHTAQQIQRLESSFKECPHPDEKQRNQLSRELGLAPRQIKFWFQNRRTQLKAQH) constitute a DNA-binding region (homeobox). Residues 81–161 (QNRRTQLKAQ…LERMSTIASK (81 aa)) adopt a coiled-coil conformation. The region spanning 227–460 (SDMDKPIMTG…LQRMCERFAS (234 aa)) is the START domain.

The protein belongs to the HD-ZIP homeobox family. Class IV subfamily. As to quaternary structure, interacts with BBM. As to expression, expressed in apical meristems and young epidermal tissue including trichomes and stipules. Expressed in lateral root tips, the L1 layer of apical inflorescence meristems and early flower primordia, carpel and petal epidermis, stigma papillae, ovule primordia, nucellus and embryo.

It localises to the nucleus. Its function is as follows. Transcription factor which acts as a positive regulator of drought stress tolerance. Can transactivate CIPK3, NCED3 and ERECTA. Transactivates several cell-wall-loosening protein genes by directly binding to HD motifs in their promoters. These target genes play important roles in coordinating cell-wall extensibility with root development and growth. Transactivates CYP74A/AOS, AOC3, OPR3 and 4CLL5/OPCL1 genes by directly binding to HD motifs in their promoters. These target genes are involved in jasmonate (JA) biosynthesis, and JA signaling affects root architecture by activating auxin signaling, which promotes lateral root formation. Acts as a negative regulator of trichome branching. Required for the establishment of giant cell identity on the abaxial side of sepals. Seems to promote cell differentiation. May regulate cell differentiation and proliferation during root and shoot meristem development. The chain is Homeobox-leucine zipper protein HDG11 from Arabidopsis thaliana (Mouse-ear cress).